Reading from the N-terminus, the 709-residue chain is Elongation factor G (709 aa).

Residues 9 to 296 enclose the tr-type G domain; that stretch reads AKVRNIGIMA…AVVRYLPSPL (288 aa). GTP is bound by residues 18-25, 86-90, and 140-143; these read AHIDAGKT, DTPGH, and NKLD.

It belongs to the TRAFAC class translation factor GTPase superfamily. Classic translation factor GTPase family. EF-G/EF-2 subfamily.

The protein localises to the cytoplasm. In terms of biological role, catalyzes the GTP-dependent ribosomal translocation step during translation elongation. During this step, the ribosome changes from the pre-translocational (PRE) to the post-translocational (POST) state as the newly formed A-site-bound peptidyl-tRNA and P-site-bound deacylated tRNA move to the P and E sites, respectively. Catalyzes the coordinated movement of the two tRNA molecules, the mRNA and conformational changes in the ribosome. This chain is Elongation factor G, found in Streptomyces griseus subsp. griseus (strain JCM 4626 / CBS 651.72 / NBRC 13350 / KCC S-0626 / ISP 5235).